A 109-amino-acid chain; its full sequence is Large ribosomal subunit protein uL22 (109 aa).

This sequence belongs to the universal ribosomal protein uL22 family. In terms of assembly, part of the 50S ribosomal subunit.

This protein binds specifically to 23S rRNA; its binding is stimulated by other ribosomal proteins, e.g. L4, L17, and L20. It is important during the early stages of 50S assembly. It makes multiple contacts with different domains of the 23S rRNA in the assembled 50S subunit and ribosome. Its function is as follows. The globular domain of the protein is located near the polypeptide exit tunnel on the outside of the subunit, while an extended beta-hairpin is found that lines the wall of the exit tunnel in the center of the 70S ribosome. In Cupriavidus metallidurans (strain ATCC 43123 / DSM 2839 / NBRC 102507 / CH34) (Ralstonia metallidurans), this protein is Large ribosomal subunit protein uL22.